Consider the following 276-residue polypeptide: Bifunctional protein FolD (276 aa).

NADP(+)-binding positions include 158 to 160, Ser183, and Ile224; that span reads NRS.

It belongs to the tetrahydrofolate dehydrogenase/cyclohydrolase family. In terms of assembly, homodimer.

The enzyme catalyses (6R)-5,10-methylene-5,6,7,8-tetrahydrofolate + NADP(+) = (6R)-5,10-methenyltetrahydrofolate + NADPH. It catalyses the reaction (6R)-5,10-methenyltetrahydrofolate + H2O = (6R)-10-formyltetrahydrofolate + H(+). It functions in the pathway one-carbon metabolism; tetrahydrofolate interconversion. In terms of biological role, catalyzes the oxidation of 5,10-methylenetetrahydrofolate to 5,10-methenyltetrahydrofolate and then the hydrolysis of 5,10-methenyltetrahydrofolate to 10-formyltetrahydrofolate. The polypeptide is Bifunctional protein FolD (Picrophilus torridus (strain ATCC 700027 / DSM 9790 / JCM 10055 / NBRC 100828 / KAW 2/3)).